A 704-amino-acid chain; its full sequence is ATP-dependent zinc metalloprotease FtsH (704 aa).

Over 1–17 (MADSAKTPRGKKRRPFT) the chain is Cytoplasmic. A helical membrane pass occupies residues 18 to 38 (GLALWIIVALLLGMAMFSLFG). At 39–127 (RDGYQQIDTQ…DEIASSSWWS (89 aa)) the chain is on the extracellular side. Residues 128-148 (TLLLSFLPLLIFIGLFWFLIM) traverse the membrane as a helical segment. Over 149–704 (NAQGGGKAMQ…GSAGTDGTGR (556 aa)) the chain is Cytoplasmic. Position 217–224 (217–224 (GPPGTGKT)) interacts with ATP. H439 contacts Zn(2+). The active site involves E440. Zn(2+)-binding residues include H443 and D515. A disordered region spans residues 624–704 (PREVWISSTE…GSAGTDGTGR (81 aa)). Residues 681–704 (PHGGEPGGGGYGYDGSAGTDGTGR) are compositionally biased toward gly residues.

In the central section; belongs to the AAA ATPase family. It in the C-terminal section; belongs to the peptidase M41 family. Homohexamer. The cofactor is Zn(2+).

The protein localises to the cell membrane. Its function is as follows. Acts as a processive, ATP-dependent zinc metallopeptidase for both cytoplasmic and membrane proteins. Plays a role in the quality control of integral membrane proteins. This is ATP-dependent zinc metalloprotease FtsH from Brachybacterium faecium (strain ATCC 43885 / DSM 4810 / JCM 11609 / LMG 19847 / NBRC 14762 / NCIMB 9860 / 6-10).